A 252-amino-acid polypeptide reads, in one-letter code: 2-succinyl-6-hydroxy-2,4-cyclohexadiene-1-carboxylate synthase (252 aa).

The protein belongs to the AB hydrolase superfamily. MenH family. In terms of assembly, monomer.

It carries out the reaction 5-enolpyruvoyl-6-hydroxy-2-succinyl-cyclohex-3-ene-1-carboxylate = (1R,6R)-6-hydroxy-2-succinyl-cyclohexa-2,4-diene-1-carboxylate + pyruvate. The protein operates within quinol/quinone metabolism; 1,4-dihydroxy-2-naphthoate biosynthesis; 1,4-dihydroxy-2-naphthoate from chorismate: step 3/7. Its pathway is quinol/quinone metabolism; menaquinone biosynthesis. Functionally, catalyzes a proton abstraction reaction that results in 2,5-elimination of pyruvate from 2-succinyl-5-enolpyruvyl-6-hydroxy-3-cyclohexene-1-carboxylate (SEPHCHC) and the formation of 2-succinyl-6-hydroxy-2,4-cyclohexadiene-1-carboxylate (SHCHC). The protein is 2-succinyl-6-hydroxy-2,4-cyclohexadiene-1-carboxylate synthase of Salmonella typhimurium (strain LT2 / SGSC1412 / ATCC 700720).